Consider the following 318-residue polypeptide: 4-hydroxy-3-methylbut-2-enyl diphosphate reductase (318 aa).

Cys-12 is a binding site for [4Fe-4S] cluster. Residues His-41 and His-74 each contribute to the (2E)-4-hydroxy-3-methylbut-2-enyl diphosphate site. Residues His-41 and His-74 each coordinate dimethylallyl diphosphate. His-41 and His-74 together coordinate isopentenyl diphosphate. Cys-96 contributes to the [4Fe-4S] cluster binding site. A (2E)-4-hydroxy-3-methylbut-2-enyl diphosphate-binding site is contributed by His-124. His-124 is a dimethylallyl diphosphate binding site. An isopentenyl diphosphate-binding site is contributed by His-124. The active-site Proton donor is the Glu-126. Thr-167 provides a ligand contact to (2E)-4-hydroxy-3-methylbut-2-enyl diphosphate. Cys-197 lines the [4Fe-4S] cluster pocket. (2E)-4-hydroxy-3-methylbut-2-enyl diphosphate is bound by residues Ser-225, Ser-226, Asn-227, and Ser-269. 4 residues coordinate dimethylallyl diphosphate: Ser-225, Ser-226, Asn-227, and Ser-269. Isopentenyl diphosphate is bound by residues Ser-225, Ser-226, Asn-227, and Ser-269.

This sequence belongs to the IspH family. [4Fe-4S] cluster is required as a cofactor.

It carries out the reaction isopentenyl diphosphate + 2 oxidized [2Fe-2S]-[ferredoxin] + H2O = (2E)-4-hydroxy-3-methylbut-2-enyl diphosphate + 2 reduced [2Fe-2S]-[ferredoxin] + 2 H(+). The enzyme catalyses dimethylallyl diphosphate + 2 oxidized [2Fe-2S]-[ferredoxin] + H2O = (2E)-4-hydroxy-3-methylbut-2-enyl diphosphate + 2 reduced [2Fe-2S]-[ferredoxin] + 2 H(+). Its pathway is isoprenoid biosynthesis; dimethylallyl diphosphate biosynthesis; dimethylallyl diphosphate from (2E)-4-hydroxy-3-methylbutenyl diphosphate: step 1/1. The protein operates within isoprenoid biosynthesis; isopentenyl diphosphate biosynthesis via DXP pathway; isopentenyl diphosphate from 1-deoxy-D-xylulose 5-phosphate: step 6/6. Catalyzes the conversion of 1-hydroxy-2-methyl-2-(E)-butenyl 4-diphosphate (HMBPP) into a mixture of isopentenyl diphosphate (IPP) and dimethylallyl diphosphate (DMAPP). Acts in the terminal step of the DOXP/MEP pathway for isoprenoid precursor biosynthesis. This Francisella tularensis subsp. mediasiatica (strain FSC147) protein is 4-hydroxy-3-methylbut-2-enyl diphosphate reductase.